The primary structure comprises 80 residues: Exodeoxyribonuclease 7 small subunit (80 aa).

This sequence belongs to the XseB family. Heterooligomer composed of large and small subunits.

It localises to the cytoplasm. It catalyses the reaction Exonucleolytic cleavage in either 5'- to 3'- or 3'- to 5'-direction to yield nucleoside 5'-phosphates.. Functionally, bidirectionally degrades single-stranded DNA into large acid-insoluble oligonucleotides, which are then degraded further into small acid-soluble oligonucleotides. In Vibrio parahaemolyticus serotype O3:K6 (strain RIMD 2210633), this protein is Exodeoxyribonuclease 7 small subunit.